A 389-amino-acid chain; its full sequence is Trans-2-enoyl-CoA reductase [NADH] (389 aa).

NAD(+)-binding positions include 47–52, 73–74, 110–111, and 138–139; these read GASTGY, FE, DA, and LA. Tyrosine 224 serves as a coordination point for substrate. Catalysis depends on tyrosine 234, which acts as the Proton donor. NAD(+) is bound by residues lysine 243 and 272-274; that span reads LVT.

The protein belongs to the TER reductase family. In terms of assembly, monomer.

The enzyme catalyses a 2,3-saturated acyl-CoA + NAD(+) = a (2E)-enoyl-CoA + NADH + H(+). Its pathway is lipid metabolism; fatty acid biosynthesis. Functionally, involved in the fatty acid synthesis (FAS II). Catalyzes the reduction of a carbon-carbon double bond in an enoyl moiety that is covalently linked to a coenzyme A (CoA). This is Trans-2-enoyl-CoA reductase [NADH] from Clostridium perfringens (strain SM101 / Type A).